The following is an 85-amino-acid chain: MAEKQRQLKLQKIYKQKYIGLGDESTTREQWQRNVRNDTLNTLQGHSASLEYVSLSRGDLSIRDTRIHLLKSMSPGYKAYLREER.

In terms of assembly, belongs to the SF3b complex composed of CUS1, HSH49, HSH155, RCP1, RDS3 and RSE1.

The protein localises to the nucleus. Functionally, involved in pre-mRNA splicing. Required for the SF3b integrity and prespliceosome assembly. The chain is RDS3 complex subunit 10 (YSF3) from Saccharomyces cerevisiae (strain ATCC 204508 / S288c) (Baker's yeast).